Consider the following 58-residue polypeptide: UPF0391 membrane protein Sfri_4000 (58 aa).

2 helical membrane-spanning segments follow: residues Leu6–Ala26 and Ala27–Val47.

Belongs to the UPF0391 family.

The protein localises to the cell membrane. This is UPF0391 membrane protein Sfri_4000 from Shewanella frigidimarina (strain NCIMB 400).